We begin with the raw amino-acid sequence, 351 residues long: Heat-inducible transcription repressor HrcA (351 aa).

It belongs to the HrcA family.

Negative regulator of class I heat shock genes (grpE-dnaK-dnaJ and groELS operons). Prevents heat-shock induction of these operons. This Mycoplasma pneumoniae (strain ATCC 29342 / M129 / Subtype 1) (Mycoplasmoides pneumoniae) protein is Heat-inducible transcription repressor HrcA.